Reading from the N-terminus, the 90-residue chain is Probable Fe(2+)-trafficking protein (90 aa).

This sequence belongs to the Fe(2+)-trafficking protein family.

In terms of biological role, could be a mediator in iron transactions between iron acquisition and iron-requiring processes, such as synthesis and/or repair of Fe-S clusters in biosynthetic enzymes. This chain is Probable Fe(2+)-trafficking protein, found in Vibrio vulnificus (strain CMCP6).